Here is a 626-residue protein sequence, read N- to C-terminus: Phosphomethylpyrimidine synthase (626 aa).

Residues Ala-92–Asp-106 show a composition bias toward basic and acidic residues. The disordered stretch occupies residues Ala-92–Val-117. Substrate is bound by residues Asn-219, Met-248, Tyr-277, His-313, Ser-333–Gly-335, Asp-374–Arg-377, and Glu-413. Residue His-417 coordinates Zn(2+). Tyr-440 contributes to the substrate binding site. A Zn(2+)-binding site is contributed by His-481. [4Fe-4S] cluster contacts are provided by Cys-561, Cys-564, and Cys-569.

This sequence belongs to the ThiC family. As to quaternary structure, homodimer. It depends on [4Fe-4S] cluster as a cofactor.

The enzyme catalyses 5-amino-1-(5-phospho-beta-D-ribosyl)imidazole + S-adenosyl-L-methionine = 4-amino-2-methyl-5-(phosphooxymethyl)pyrimidine + CO + 5'-deoxyadenosine + formate + L-methionine + 3 H(+). Its pathway is cofactor biosynthesis; thiamine diphosphate biosynthesis. Catalyzes the synthesis of the hydroxymethylpyrimidine phosphate (HMP-P) moiety of thiamine from aminoimidazole ribotide (AIR) in a radical S-adenosyl-L-methionine (SAM)-dependent reaction. The chain is Phosphomethylpyrimidine synthase from Novosphingobium aromaticivorans (strain ATCC 700278 / DSM 12444 / CCUG 56034 / CIP 105152 / NBRC 16084 / F199).